The primary structure comprises 304 residues: Lipoyl synthase (304 aa).

Positions 41, 46, 52, 68, 72, 75, and 281 each coordinate [4Fe-4S] cluster. The 217-residue stretch at 54-270 (GARRTATFMI…RKIAMEKGFK (217 aa)) folds into the Radical SAM core domain. The tract at residues 282 to 304 (YHADEQVNEAAKEKQRQGEEQLN) is disordered.

The protein belongs to the radical SAM superfamily. Lipoyl synthase family. Requires [4Fe-4S] cluster as cofactor.

The protein resides in the cytoplasm. It carries out the reaction [[Fe-S] cluster scaffold protein carrying a second [4Fe-4S](2+) cluster] + N(6)-octanoyl-L-lysyl-[protein] + 2 oxidized [2Fe-2S]-[ferredoxin] + 2 S-adenosyl-L-methionine + 4 H(+) = [[Fe-S] cluster scaffold protein] + N(6)-[(R)-dihydrolipoyl]-L-lysyl-[protein] + 4 Fe(3+) + 2 hydrogen sulfide + 2 5'-deoxyadenosine + 2 L-methionine + 2 reduced [2Fe-2S]-[ferredoxin]. It participates in protein modification; protein lipoylation via endogenous pathway; protein N(6)-(lipoyl)lysine from octanoyl-[acyl-carrier-protein]. In terms of biological role, catalyzes the radical-mediated insertion of two sulfur atoms into the C-6 and C-8 positions of the octanoyl moiety bound to the lipoyl domains of lipoate-dependent enzymes, thereby converting the octanoylated domains into lipoylated derivatives. This Staphylococcus epidermidis (strain ATCC 35984 / DSM 28319 / BCRC 17069 / CCUG 31568 / BM 3577 / RP62A) protein is Lipoyl synthase.